The sequence spans 306 residues: Recombination-associated protein RdgC (306 aa).

The protein belongs to the RdgC family.

The protein resides in the cytoplasm. It is found in the nucleoid. Its function is as follows. May be involved in recombination. The chain is Recombination-associated protein RdgC from Pseudomonas syringae pv. tomato (strain ATCC BAA-871 / DC3000).